The chain runs to 392 residues: MALLTILRILLWGVVLFMEQRVQMAKPGWPSTALLADDPTLPSILDLAKEAPGKEMKQWPQGYPLRYMLKLYHRSADPHGHPRENRTIGAKMVRLVKPSANTVRPPRGSWHVQTLDFPLASNQVAYELIRATVVYRHQLHLVNYHLSCHVETWVPKCRTKHLPSSKSGSSKPSPMSKAWTEIDITHCIQQKLWNRKGRSVLRLRFMCQQQKGNETREFRWHGMTSLDVAFLLLYFNDTDDRVQGKLLARGQEELTDRESSFLMRSVRQACSIESDASCPSQEHDGSVNNQCSLHPYKVSFHQLGWDHWIIAPRLYTPNYCKGICTRVLPYGLNSPNHAIIQSLVNELVNHSVPQPSCVPYNFLPMSILLIETNGSILYKEYEGMIAQSCTCR.

The signal sequence occupies residues 1–25 (MALLTILRILLWGVVLFMEQRVQMA). Positions 26–267 (KPGWPSTALL…ESSFLMRSVR (242 aa)) are excised as a propeptide. Asn85, Asn213, Asn236, Asn349, and Asn373 each carry an N-linked (GlcNAc...) asparagine glycan. 3 cysteine pairs are disulfide-bonded: Cys291/Cys357, Cys320/Cys389, and Cys324/Cys391.

The protein belongs to the TGF-beta family. In terms of assembly, homodimer. But, in contrast to other members of this family, cannot be disulfide-linked. As to expression, ovary specific.

The protein localises to the secreted. In terms of biological role, may be involved in follicular development. Oocyte-specific growth/differentiation factor that stimulates folliculogenesis and granulosa cell (GC) growth. This Mus musculus (Mouse) protein is Bone morphogenetic protein 15 (Bmp15).